Here is a 264-residue protein sequence, read N- to C-terminus: Thymidylate synthase (264 aa).

A dUMP-binding site is contributed by Arg-21. (6R)-5,10-methylene-5,6,7,8-tetrahydrofolate is bound at residue His-51. Arg-126 to Arg-127 provides a ligand contact to dUMP. Cys-146 acts as the Nucleophile in catalysis. DUMP-binding positions include Arg-166–Asp-169, Asn-177, and His-207–Tyr-209. Asp-169 lines the (6R)-5,10-methylene-5,6,7,8-tetrahydrofolate pocket. Ala-263 is a (6R)-5,10-methylene-5,6,7,8-tetrahydrofolate binding site.

The protein belongs to the thymidylate synthase family. Bacterial-type ThyA subfamily. In terms of assembly, homodimer.

The protein localises to the cytoplasm. The enzyme catalyses dUMP + (6R)-5,10-methylene-5,6,7,8-tetrahydrofolate = 7,8-dihydrofolate + dTMP. It participates in pyrimidine metabolism; dTTP biosynthesis. Its function is as follows. Catalyzes the reductive methylation of 2'-deoxyuridine-5'-monophosphate (dUMP) to 2'-deoxythymidine-5'-monophosphate (dTMP) while utilizing 5,10-methylenetetrahydrofolate (mTHF) as the methyl donor and reductant in the reaction, yielding dihydrofolate (DHF) as a by-product. This enzymatic reaction provides an intracellular de novo source of dTMP, an essential precursor for DNA biosynthesis. The sequence is that of Thymidylate synthase from Pseudomonas aeruginosa (strain LESB58).